Here is a 683-residue protein sequence, read N- to C-terminus: Phenoloxidase 3 (683 aa).

Residues 1–48 (MADKKNLLLLFDHPTEPVFMDKGGNGTVFDVPASYVTDRYNKMCKKVQ) constitute a propeptide that is removed on maturation. Asparagine 25 is a glycosylation site (N-linked (GlcNAc...) asparagine). Cu cation is bound by residues histidine 209, histidine 213, and histidine 239. The active-site Proton acceptor is the glutamate 351. A glycan (N-linked (GlcNAc...) asparagine) is linked at asparagine 358. Cu cation contacts are provided by histidine 366, histidine 370, and histidine 406. 2 N-linked (GlcNAc...) asparagine glycosylation sites follow: asparagine 492 and asparagine 514. Disulfide bonds link cysteine 574/cysteine 617 and cysteine 576/cysteine 624.

Belongs to the tyrosinase family. Requires Cu(2+) as cofactor. Post-translationally, upon activation, a trypsin type protease cleaves prophenol oxidase to yield the active enzyme.

It is found in the secreted. It carries out the reaction 2 L-dopa + O2 = 2 L-dopaquinone + 2 H2O. It catalyses the reaction L-tyrosine + O2 = L-dopaquinone + H2O. In terms of biological role, this is a copper-containing oxidase that functions in the formation of pigments such as melanins and other polyphenolic compounds. Catalyzes the rate-limiting conversions of tyrosine to DOPA, DOPA to DOPA-quinone and possibly 5,6 dihydroxyindole to indole-5'6 quinone. The polypeptide is Phenoloxidase 3 (PPO3) (Drosophila erecta (Fruit fly)).